We begin with the raw amino-acid sequence, 121 residues long: Small ribosomal subunit protein uS13 (121 aa).

The interval 95–121 (LPVRGQNTKNNARTRKGKAVAIAGKKK) is disordered. Positions 106-121 (ARTRKGKAVAIAGKKK) are enriched in basic residues.

It belongs to the universal ribosomal protein uS13 family. In terms of assembly, part of the 30S ribosomal subunit. Forms a loose heterodimer with protein S19. Forms two bridges to the 50S subunit in the 70S ribosome.

Functionally, located at the top of the head of the 30S subunit, it contacts several helices of the 16S rRNA. In the 70S ribosome it contacts the 23S rRNA (bridge B1a) and protein L5 of the 50S subunit (bridge B1b), connecting the 2 subunits; these bridges are implicated in subunit movement. Contacts the tRNAs in the A and P-sites. The sequence is that of Small ribosomal subunit protein uS13 from Streptococcus thermophilus (strain CNRZ 1066).